The chain runs to 107 residues: UPF0145 protein YbjQ (107 aa).

This sequence belongs to the UPF0145 family.

The chain is UPF0145 protein YbjQ from Escherichia coli (strain SMS-3-5 / SECEC).